The following is a 456-amino-acid chain: Adenylosuccinate lyase (456 aa).

N(6)-(1,2-dicarboxyethyl)-AMP contacts are provided by residues 15-16 (RY), 90-92 (NHD), and 122-123 (TS). Residue His-171 is the Proton donor/acceptor of the active site. Gln-247 lines the N(6)-(1,2-dicarboxyethyl)-AMP pocket. Residue Ser-295 is the Proton donor/acceptor of the active site. N(6)-(1,2-dicarboxyethyl)-AMP contacts are provided by residues Ser-296, 301 to 303 (KVN), Asn-309, Arg-335, and 340 to 344 (STVLR).

This sequence belongs to the lyase 1 family. Adenylosuccinate lyase subfamily. In terms of assembly, homotetramer. Residues from neighboring subunits contribute catalytic and substrate-binding residues to each active site.

The enzyme catalyses N(6)-(1,2-dicarboxyethyl)-AMP = fumarate + AMP. The catalysed reaction is (2S)-2-[5-amino-1-(5-phospho-beta-D-ribosyl)imidazole-4-carboxamido]succinate = 5-amino-1-(5-phospho-beta-D-ribosyl)imidazole-4-carboxamide + fumarate. Its pathway is purine metabolism; AMP biosynthesis via de novo pathway; AMP from IMP: step 2/2. It functions in the pathway purine metabolism; IMP biosynthesis via de novo pathway; 5-amino-1-(5-phospho-D-ribosyl)imidazole-4-carboxamide from 5-amino-1-(5-phospho-D-ribosyl)imidazole-4-carboxylate: step 2/2. Catalyzes two reactions in de novo purine nucleotide biosynthesis. Catalyzes the breakdown of 5-aminoimidazole- (N-succinylocarboxamide) ribotide (SAICAR or 2-[5-amino-1-(5-phospho-beta-D-ribosyl)imidazole-4-carboxamido]succinate) to 5-aminoimidazole-4-carboxamide ribotide (AICAR or 5-amino-1-(5-phospho-beta-D-ribosyl)imidazole-4-carboxamide) and fumarate, and of adenylosuccinate (ADS or N(6)-(1,2-dicarboxyethyl)-AMP) to adenosine monophosphate (AMP) and fumarate. The polypeptide is Adenylosuccinate lyase (purB) (Haemophilus influenzae (strain ATCC 51907 / DSM 11121 / KW20 / Rd)).